Consider the following 262-residue polypeptide: Small ribosomal subunit protein uS2 (262 aa).

Residues 236-262 (AGGAAEAPAAEDVQTEEAAAPEADSAE) are disordered.

The protein belongs to the universal ribosomal protein uS2 family.

The chain is Small ribosomal subunit protein uS2 from Psychrobacter sp. (strain PRwf-1).